Reading from the N-terminus, the 621-residue chain is tRNA uridine 5-carboxymethylaminomethyl modification enzyme MnmG (621 aa).

FAD is bound at residue 9 to 14 (GGGHAG). 270-284 (GPRYCPSIEDKIVKF) contacts NAD(+).

Belongs to the MnmG family. Homodimer. Heterotetramer of two MnmE and two MnmG subunits. Requires FAD as cofactor.

The protein localises to the cytoplasm. NAD-binding protein involved in the addition of a carboxymethylaminomethyl (cmnm) group at the wobble position (U34) of certain tRNAs, forming tRNA-cmnm(5)s(2)U34. This chain is tRNA uridine 5-carboxymethylaminomethyl modification enzyme MnmG, found in Borreliella burgdorferi (strain ATCC 35210 / DSM 4680 / CIP 102532 / B31) (Borrelia burgdorferi).